Here is a 507-residue protein sequence, read N- to C-terminus: Maturase K (507 aa).

It belongs to the intron maturase 2 family. MatK subfamily.

The protein resides in the plastid. Its subcellular location is the chloroplast. Functionally, usually encoded in the trnK tRNA gene intron. Probably assists in splicing its own and other chloroplast group II introns. The protein is Maturase K of Robinia pseudoacacia (Black locust).